Here is a 206-residue protein sequence, read N- to C-terminus: Recombination protein RecR (206 aa).

The C4-type zinc-finger motif lies at 58–73 (CNICGYITEKNICNFC). In terms of domain architecture, Toprim spans 81-178 (STIMIVADNR…KITKLAYGIP (98 aa)).

The protein belongs to the RecR family.

Its function is as follows. May play a role in DNA repair. It seems to be involved in an RecBC-independent recombinational process of DNA repair. It may act with RecF and RecO. The protein is Recombination protein RecR of Phytoplasma mali (strain AT).